Here is a 152-residue protein sequence, read N- to C-terminus: ESAT-6 secretion machinery protein EssA (152 aa).

The Cytoplasmic segment spans residues 1–114 (MLMNSVIALT…PYIQNKQEKK (114 aa)). The chain crosses the membrane as a helical span at residues 115 to 135 (IFPYILMSVGAFLTLGFVIFS). The Extracellular portion of the chain corresponds to 136-152 (IHKGRRTKNESARKSNI).

This sequence belongs to the EssA family.

The protein localises to the cell membrane. Its function is as follows. Component of the ESAT-6 secretion system (Ess). Required for the secretion of EsxA and EsxB. The chain is ESAT-6 secretion machinery protein EssA from Staphylococcus aureus (strain Mu50 / ATCC 700699).